The sequence spans 872 residues: uncharacterized protein (872 aa).

Positions leucine 496 to valine 524 form a coiled coil. Disordered stretches follow at residues arginine 595–glutamine 736 and threonine 844–valine 872. Polar residues-rich tracts occupy residues glutamine 615–phenylalanine 659 and proline 670–valine 686. A compositionally biased stretch (low complexity) spans glutamine 687–glutamine 736.

It localises to the virion. This is an uncharacterized protein from Acanthamoeba polyphaga mimivirus (APMV).